Here is a 215-residue protein sequence, read N- to C-terminus: MTKIKICGITRLSDALESCRAGADALGFNFSSLSPRAITPERAKEIIEKLPPFVASTGIFVDQSPEEINAICRFCKLQIAQLHSEQYSPEDARAITEAKVIKVFRPEENFAVEEVFAFAEKSGINAFLFDAYRPDMAGGTGETIRASLATRIFNALGDSCYPILAGGLNESNIGEAIRSLQPYGVDTASGVECEPGIKDPVKIKAFIQAVRKTVF.

The protein belongs to the TrpF family.

The enzyme catalyses N-(5-phospho-beta-D-ribosyl)anthranilate = 1-(2-carboxyphenylamino)-1-deoxy-D-ribulose 5-phosphate. It functions in the pathway amino-acid biosynthesis; L-tryptophan biosynthesis; L-tryptophan from chorismate: step 3/5. This is N-(5'-phosphoribosyl)anthranilate isomerase from Pelodictyon phaeoclathratiforme (strain DSM 5477 / BU-1).